A 257-amino-acid polypeptide reads, in one-letter code: Imidazole glycerol phosphate synthase subunit HisF (257 aa).

Active-site residues include Asp-11 and Asp-130.

Belongs to the HisA/HisF family. As to quaternary structure, heterodimer of HisH and HisF.

It is found in the cytoplasm. The catalysed reaction is 5-[(5-phospho-1-deoxy-D-ribulos-1-ylimino)methylamino]-1-(5-phospho-beta-D-ribosyl)imidazole-4-carboxamide + L-glutamine = D-erythro-1-(imidazol-4-yl)glycerol 3-phosphate + 5-amino-1-(5-phospho-beta-D-ribosyl)imidazole-4-carboxamide + L-glutamate + H(+). The protein operates within amino-acid biosynthesis; L-histidine biosynthesis; L-histidine from 5-phospho-alpha-D-ribose 1-diphosphate: step 5/9. Functionally, IGPS catalyzes the conversion of PRFAR and glutamine to IGP, AICAR and glutamate. The HisF subunit catalyzes the cyclization activity that produces IGP and AICAR from PRFAR using the ammonia provided by the HisH subunit. This is Imidazole glycerol phosphate synthase subunit HisF from Afipia carboxidovorans (strain ATCC 49405 / DSM 1227 / KCTC 32145 / OM5) (Oligotropha carboxidovorans).